A 208-amino-acid chain; its full sequence is Large ribosomal subunit protein uL4 (208 aa).

Residues arginine 54 to serine 78 form a disordered region.

This sequence belongs to the universal ribosomal protein uL4 family. As to quaternary structure, part of the 50S ribosomal subunit.

In terms of biological role, one of the primary rRNA binding proteins, this protein initially binds near the 5'-end of the 23S rRNA. It is important during the early stages of 50S assembly. It makes multiple contacts with different domains of the 23S rRNA in the assembled 50S subunit and ribosome. Functionally, forms part of the polypeptide exit tunnel. The sequence is that of Large ribosomal subunit protein uL4 from Methylobacillus flagellatus (strain ATCC 51484 / DSM 6875 / VKM B-1610 / KT).